Here is a 357-residue protein sequence, read N- to C-terminus: Hypersensitivity response secretion protein HrcU (357 aa).

Positions 1 to 21 (MSDEKTEQPTDKKLEDAHRDG) are disordered. Helical transmembrane passes span 29-49 (LTAA…ASVF), 84-104 (LVLM…IATW), 149-169 (VAVA…IVGA), 180-200 (IGMT…LILG), and 323-343 (LYGP…AWVG).

This sequence belongs to the type III secretion exporter family.

It is found in the cell membrane. Involved in the secretion of PopA, a proteinaceous elicitor of the hypersensitivity response in plants. The chain is Hypersensitivity response secretion protein HrcU (hrcU) from Ralstonia nicotianae (strain ATCC BAA-1114 / GMI1000) (Ralstonia solanacearum).